A 557-amino-acid polypeptide reads, in one-letter code: Urocanate hydratase (557 aa).

The disordered stretch occupies residues 1-20; the sequence is MSNPRHNEREVRSPRGDELN. NAD(+) contacts are provided by residues 52-53, Gln130, 176-178, Glu196, Arg201, 242-243, 263-267, 273-274, and Tyr322; these read GG, GMG, NA, QTSAH, and YL. Cys410 is an active-site residue. Gly492 is a binding site for NAD(+).

This sequence belongs to the urocanase family. Requires NAD(+) as cofactor.

It localises to the cytoplasm. It carries out the reaction 4-imidazolone-5-propanoate = trans-urocanate + H2O. Its pathway is amino-acid degradation; L-histidine degradation into L-glutamate; N-formimidoyl-L-glutamate from L-histidine: step 2/3. Functionally, catalyzes the conversion of urocanate to 4-imidazolone-5-propionate. This is Urocanate hydratase from Brucella suis (strain ATCC 23445 / NCTC 10510).